The following is a 294-amino-acid chain: Phosphoprotein (294 aa).

Residues 12 to 28 form a binding to monomeric RNA-free nucleoprotein region; sequence MGNEAAKAAEAFQRSLK. The disordered stretch occupies residues 52 to 97; the sequence is KPTISKSTKVTTPPERRNAWGEKPDTTRNQTEEARNEATLEDTSRL. Residues 65 to 97 show a composition bias toward basic and acidic residues; sequence PERRNAWGEKPDTTRNQTEEARNEATLEDTSRL. Ser106 is subject to Phosphoserine. The interval 123 to 128 is binding to host phosphatase PP1; sequence KKKVTF. Residues 135-157 are binding to protein M2-1; that stretch reads RYTKLEMEALELLSDNEDDDAES. Phosphoserine occurs at positions 148, 157, 158, 168, and 171. An oligomerization and binding to RNA-directed RNA polymerase L region spans residues 169 to 194; sequence ALSLEARLESIDEKLSMILGLLRTLN. Residues 234–294 are disordered; that stretch reads MKEEAKQKSK…PDDDLYSLTM (61 aa). Residues 251–279 are binding to RNA-directed RNA polymerase L; that stretch reads LTEKAKELNKIVEDESTSGESEEEEEEED. Positions 253–263 are enriched in basic and acidic residues; that stretch reads EKAKELNKIVE. Residues 264–294 are compositionally biased toward acidic residues; it reads DESTSGESEEEEEEEDEEESNPDDDLYSLTM. The interval 281–294 is binding to the N-RNA complex; sequence EESNPDDDLYSLTM.

This sequence belongs to the pneumoviridae phosphoprotein P family. As to quaternary structure, homotetramer. Interacts with protein M2-1; the interaction between the two tetramers is required for the anti-termination and elongation transcriptional activities of protein M2-1. Interacts with host phosphatase PP1; this interaction recruits PP1 to the inclusion bodies. Formation of a complex PP1/M2-1/P allows P to target host PP1 phosphatase to the M2-1 substrate. Interacts with the nucleoprotein N; the phosphorylated phosphoprotein P binds to N-RNA complex. Interacts with the monomeric RNA-free nucleoprotein N. Interacts with RNA-directed RNA polymerase L (via N-terminus); the association of P and L forms the polymerase complex. In terms of processing, constitutively phosphorylated by host.

It is found in the virion. It localises to the host cytoplasm. Functionally, plays critical roles in regulating RNA replication and transcription through its interactions with multiple proteins. Tethers the RNA-directed RNA polymerase L to the nucleoprotein-RNA complex. Recruits the M2-1 protein, a processivity factor that is required for efficient transcription of viral RNA. Acts as a chaperone for neo-synthesized nucleoprotein by forming an N-P complex that preserves N in a monomeric and RNA-free state and prevents the association of nascent N with host cell RNAs. Recruits the host phosphatase PP1 to inclusion bodies to regulate viral transcription. The chain is Phosphoprotein from Avian metapneumovirus (isolate Canada goose/Minnesota/15a/2001) (AMPV).